Consider the following 379-residue polypeptide: Oxysterol-binding protein-related protein 4C (379 aa).

The protein belongs to the OSBP family. In terms of tissue distribution, expressed in flowers.

May be involved in the transport of sterols. The polypeptide is Oxysterol-binding protein-related protein 4C (ORP4C) (Arabidopsis thaliana (Mouse-ear cress)).